A 261-amino-acid polypeptide reads, in one-letter code: MELKIGRAIIKHGLEDLYEYSDVDVAIVGAGPAGLTAARYLAERGFKVLVFERRFSFGGGIGPGGNMIPKIVVQEEALPILKDFKVRFKPAGDGLYTVDPAELIAKLAAGAIDAGAKILLGVHVDDVIFRGDPPRVAGLLWIWTPIQMSGMHVDPLYTQAKAVIDATGHDAEVVSVAARKVPELGLQLQGEKSAWSEVSEKLVVEHTGRVAPGLYVAGIAVCAVYGLPRMGPIFGGMLMSGRKVAEVVAKDLAEVAYAVRA.

Residues A33, 52–53 (ER), G60, V124, and 152–154 (HVD) each bind NAD(+). Fe cation-binding residues include D154 and H169. Position 219 (I219) interacts with NAD(+). Residue R229 participates in glycine binding.

The protein belongs to the THI4 family. In terms of assembly, homooctamer; tetramer of dimers. Fe(2+) is required as a cofactor.

It catalyses the reaction hydrogen sulfide + glycine + NAD(+) = ADP-5-ethyl-4-methylthiazole-2-carboxylate + nicotinamide + 3 H2O + H(+). It participates in cofactor biosynthesis; thiamine diphosphate biosynthesis. Its function is as follows. Involved in the biosynthesis of the thiazole moiety of thiamine. Catalyzes the conversion of NAD and glycine to adenosine diphosphate 5-(2-hydroxyethyl)-4-methylthiazole-2-carboxylate (ADT), an adenylated thiazole intermediate, using free sulfide as a source of sulfur. The protein is Thiamine thiazole synthase of Pyrobaculum calidifontis (strain DSM 21063 / JCM 11548 / VA1).